The following is a 479-amino-acid chain: MENITAQLKRGISRQFSTGSIRRTLSRQFTRQSSLDPRRTNMRFSFGRQSSLDPIRRSPDSSKSDDEPHMSVPENLDSTMQLLFMASKGDVRGIEELLDEGIDVNSIDLDGRTALHIAACEGHLGVVKALLSRRANIDARDRWGSTAAADAKYYGNLDVYNLLKARGAKVPKTRKTPMTVSNPREVPEYELNPLEVQVRKSDGISKGAYQVAKWNGTRVSVKILDKDSYSDPERINAFRHELTLLEKVRHPNVIQFVGAVTQNIPMMIVVEYNPKGDLSVYLQKKGRLSPSKALRFALDIARGMNYLHECKPDPIIHCDLKPKNILLDRGGQLKISGFGMIRLSKISQDKAKVANHKAHIDLSNYYIAPEVYKDEIFDLRVDAHSFGVILYEITEGVPVFHPRPPEEVARMMCLEGKRPVFKTKSRSYPPDIKELIEKCWHPEAGIRPTFSEIIIRLDKIVANCSKQGWWKDTFKFPWK.

Phosphoserine is present on residues serine 17 and serine 26. Residues 29-73 (FTRQSSLDPRRTNMRFSFGRQSSLDPIRRSPDSSKSDDEPHMSVP) are disordered. The segment covering 54 to 69 (PIRRSPDSSKSDDEPH) has biased composition (basic and acidic residues). ANK repeat units follow at residues 77-106 (DSTM…DVNS) and 110-139 (DGRT…NIDA). Residues 194–461 (LEVQVRKSDG…EIIIRLDKIV (268 aa)) enclose the Protein kinase domain. ATP contacts are provided by residues 200 to 208 (KSDGISKGA) and lysine 222. The Proton acceptor role is filled by aspartate 319.

It belongs to the protein kinase superfamily. Ser/Thr protein kinase family. In terms of assembly, interacts with CML9 and POT5/HAK5. In terms of processing, autophosphorylated at Ser-17 and Ser-26.

Its subcellular location is the cell membrane. It localises to the endoplasmic reticulum membrane. The enzyme catalyses L-seryl-[protein] + ATP = O-phospho-L-seryl-[protein] + ADP + H(+). It catalyses the reaction L-threonyl-[protein] + ATP = O-phospho-L-threonyl-[protein] + ADP + H(+). With respect to regulation, kinase activity is suppressed by interaction with CML9. Its function is as follows. Functions as a link between plant defense pathways, stress responses and potassium homeostasis. Promotes osmotic stress sensitivity, responses to the bacterial-derived pathogen-associated molecular pattern (PAMP) flg22, and resistance to bacterial pathogens. Promotes the accumulation of POT5/HAK5, a potassium transporter that mediates high-affinity uptake during potassium deficiency. This Arabidopsis thaliana (Mouse-ear cress) protein is Integrin-linked protein kinase 1.